Reading from the N-terminus, the 101-residue chain is Small ribosomal subunit protein uS14 (101 aa).

The protein belongs to the universal ribosomal protein uS14 family. In terms of assembly, part of the 30S ribosomal subunit. Contacts proteins S3 and S10.

Its function is as follows. Binds 16S rRNA, required for the assembly of 30S particles and may also be responsible for determining the conformation of the 16S rRNA at the A site. The chain is Small ribosomal subunit protein uS14 from Serratia proteamaculans (strain 568).